The sequence spans 364 residues: Carbamoyl phosphate synthase pyrimidine-specific small chain (364 aa).

Positions 1 to 171 are CPSase; the sequence is MKRRLVLENG…AYPSPGRGKR (171 aa). Positions 45, 219, and 221 each coordinate L-glutamine. In terms of domain architecture, Glutamine amidotransferase type-1 spans 171-356; sequence RIVLVDFGMK…IEMIETTEKE (186 aa). The active-site Nucleophile is C246. Residues L247, Q250, N288, G290, and Y291 each contribute to the L-glutamine site. Active-site residues include H329 and E331.

It belongs to the CarA family. In terms of assembly, composed of two chains; the small (or glutamine) chain promotes the hydrolysis of glutamine to ammonia, which is used by the large (or ammonia) chain to synthesize carbamoyl phosphate. Tetramer of heterodimers (alpha,beta)4. Interacts with BrxC.

It catalyses the reaction hydrogencarbonate + L-glutamine + 2 ATP + H2O = carbamoyl phosphate + L-glutamate + 2 ADP + phosphate + 2 H(+). The catalysed reaction is L-glutamine + H2O = L-glutamate + NH4(+). Its pathway is pyrimidine metabolism; UMP biosynthesis via de novo pathway; (S)-dihydroorotate from bicarbonate: step 1/3. Its function is as follows. Small subunit of the glutamine-dependent carbamoyl phosphate synthetase (CPSase). CPSase catalyzes the formation of carbamoyl phosphate from the ammonia moiety of glutamine, carbonate, and phosphate donated by ATP, constituting the first step of the biosynthetic pathway leading to arginine and/or urea. The small subunit (glutamine amidotransferase) binds and cleaves glutamine to supply the large subunit with the substrate ammonia. The protein is Carbamoyl phosphate synthase pyrimidine-specific small chain of Bacillus subtilis (strain 168).